The chain runs to 463 residues: A-type ATP synthase subunit B (463 aa).

The protein belongs to the ATPase alpha/beta chains family. In terms of assembly, has multiple subunits with at least A(3), B(3), C, D, E, F, H, I and proteolipid K(x).

It is found in the cell membrane. In terms of biological role, component of the A-type ATP synthase that produces ATP from ADP in the presence of a proton gradient across the membrane. The B chain is a regulatory subunit. The protein is A-type ATP synthase subunit B of Thermococcus gammatolerans (strain DSM 15229 / JCM 11827 / EJ3).